Reading from the N-terminus, the 30-residue chain is Hainantoxin F7-28.42 (30 aa).

As to expression, expressed by the venom gland.

It localises to the secreted. The polypeptide is Hainantoxin F7-28.42 (Cyriopagopus hainanus (Chinese bird spider)).